A 382-amino-acid chain; its full sequence is Mannitol-1-phosphate 5-dehydrogenase (382 aa).

4–15 (AVHFGAGNIGRG) contributes to the NAD(+) binding site.

Belongs to the mannitol dehydrogenase family. In terms of assembly, monomer.

The enzyme catalyses D-mannitol 1-phosphate + NAD(+) = beta-D-fructose 6-phosphate + NADH + H(+). This Streptococcus mutans serotype c (strain ATCC 700610 / UA159) protein is Mannitol-1-phosphate 5-dehydrogenase (mtlD).